The sequence spans 254 residues: Large ribosomal subunit protein uL2 (254 aa).

Belongs to the universal ribosomal protein uL2 family.

This Eremothecium gossypii (strain ATCC 10895 / CBS 109.51 / FGSC 9923 / NRRL Y-1056) (Yeast) protein is Large ribosomal subunit protein uL2 (RPL2).